The following is a 115-amino-acid chain: MKVLVLFSVLFLTLFSYSSTEAIDEFDSDAEEDMLSLMANEQVRAKACTPRLHDCSHDRHSCCRSELFKDVCTCFYPEGGDNEVCTCQQPKHLKYMEKAADKAKKFGGKIKKWFG.

The signal sequence occupies residues 1–22 (MKVLVLFSVLFLTLFSYSSTEA). A propeptide spanning residues 23-44 (IDEFDSDAEEDMLSLMANEQVR) is cleaved from the precursor. 4 disulfides stabilise this stretch: C48–C63, C55–C72, C62–C87, and C74–C85.

This sequence belongs to the neurotoxin 19 (CSTX) family. 01 subfamily. As to expression, expressed by the venom gland.

The protein resides in the secreted. This is Toxin-like structure LSTX-D1 from Lycosa singoriensis (Wolf spider).